Reading from the N-terminus, the 522-residue chain is Putative E3 ubiquitin-protein ligase RING1a (522 aa).

The span at 1-10 shows a compositional bias: polar residues; the sequence is MSVKNNSFSS. The tract at residues 1 to 119 is disordered; the sequence is MSVKNNSFSS…RSPSSISGDQ (119 aa). A compositionally biased stretch (basic and acidic residues) spans 32–64; the sequence is LQEKDETKEEKEGDEEVKHDEAEEDQEVVKPND. Acidic residues predominate over residues 65–106; sequence AEEDDDGDDAEEDEEEEVEAEEDEEAEEEEEEEEEEEEEEED. The RING-type zinc-finger motif lies at 136–176; it reads CPICLGIIKKTRTVMECLHRFCRECIDKSMRLGNNECPACR. Disordered regions lie at residues 250–347 and 363–385; these read VLMR…DTKG and RGGT…KSVR. Positions 287–306 are enriched in basic and acidic residues; sequence NNNRGRDKDSSSDERGTEVR. Positions 316-325 are enriched in low complexity; it reads SRSTQHPSSS. 2 stretches are compositionally biased toward polar residues: residues 326–336 and 366–384; these read GANKNNGNCAD and TRSN…SKSV.

In terms of assembly, homodimer or heterodimer with RING1B. Interacts with CLF. Component of the PRC1-like complex, at least composed of RING1A, RING1B and LHP1.

Its subcellular location is the nucleus. The enzyme catalyses S-ubiquitinyl-[E2 ubiquitin-conjugating enzyme]-L-cysteine + [acceptor protein]-L-lysine = [E2 ubiquitin-conjugating enzyme]-L-cysteine + N(6)-ubiquitinyl-[acceptor protein]-L-lysine.. The protein operates within protein modification; protein ubiquitination. Functionally, putative E3 ubiquitin-protein ligase that mediates monoubiquitination of 'Lys-119' of histone H2A (H2AK119ub), thereby playing a central role in histone code and gene regulation. Its function is as follows. As part of the PRC1-like complex, repress class I KNOX gene expression. PcG PRC1 complex maintains the transcriptionally repressive state of many genes, including Hox genes, throughout development. PcG PRC1 complex acts via chromatin remodeling and modification of histones, rendering chromatin heritably changed in its expressibility. The sequence is that of Putative E3 ubiquitin-protein ligase RING1a (RING1A) from Arabidopsis thaliana (Mouse-ear cress).